The sequence spans 2522 residues: Unconventional myosin-IXAa (2522 aa).

In terms of domain architecture, Ras-associating spans 15-113 (SELTLRIYPG…YRFLLREKNL (99 aa)). In terms of domain architecture, Myosin motor spans 147 to 1007 (KDFDDLCNLP…ERQRLQDLLH (861 aa)). Residues 176-196 (IYTYVGSILIVINPFKFLPIY) form a helical membrane-spanning segment. 240-247 (GESGSGKT) serves as a coordination point for ATP. The segment at 767-802 (VNRRNPRTPLSDLQGSNAINQREGWNGRPGRQNRLS) is disordered. Residues 777-786 (SDLQGSNAIN) are compositionally biased toward polar residues. Residues 888–910 (LNKLMETLGQSQPYFVKCIRSNS) form an actin-binding region. IQ domains are found at residues 1012-1039 (SRIV…AACQ), 1063-1092 (QEGA…ASVL), 1102-1131 (QRRA…ATIR), and 1125-1154 (QRDA…QRLK). The neck or regulatory domain stretch occupies residues 1012–1149 (SRIVYLQRRF…LARQRFRELQ (138 aa)). The interval 1150–2497 (KQRLKITHLP…LQGAKSSPQR (1348 aa)) is tail. Disordered regions lie at residues 1218-1254 (GMAP…RRMR), 1318-1409 (DKAP…STRR), 1424-1612 (NEAD…GNIF), 1630-1754 (NQEK…GRVR), 1799-1827 (RLSP…VKRR), and 1962-1983 (LDSS…KDTD). The span at 1229–1242 (TIRERPRTLEDPNQ) shows a compositional bias: basic and acidic residues. Composition is skewed to polar residues over residues 1330 to 1349 (SPSS…STPD) and 1366 to 1390 (SLPT…NSVT). Basic and acidic residues-rich tracts occupy residues 1399-1408 (PSKDKKESTR) and 1426-1435 (ADVKPLEVKD). Over residues 1437–1454 (AAQTSEPPSPAQPSTDSS) the composition is skewed to polar residues. Residues 1456-1525 (VLEKLEKLNE…LRRIEQSRQE (70 aa)) adopt a coiled-coil conformation. Basic and acidic residues-rich tracts occupy residues 1458–1484 (EKLE…EMME), 1492–1523 (ILEE…EQSR), 1549–1566 (PARE…RPKD), and 1580–1589 (LESRGDEARS). Polar residues-rich tracts occupy residues 1594-1604 (KPSNQNVNISM) and 1631-1641 (QEKTPGAQNEV). The segment covering 1656 to 1665 (PGHKKARMAR) has biased composition (basic residues). The span at 1681-1690 (GESEEEEYDE) shows a compositional bias: acidic residues. Composition is skewed to basic and acidic residues over residues 1738–1753 (LGKH…DGRV) and 1810–1822 (LQRE…EPSP). A Phorbol-ester/DAG-type zinc finger spans residues 1990–2039 (GHIFKSTQYSIPTYCEYCSSLIWMMDKACVCKLCRYACHRKCCQKMTTKC). The Rho-GAP domain occupies 2054–2242 (VELSRLTNDE…LIICEQMNKY (189 aa)). Disordered regions lie at residues 2274–2325 (PVHR…QEEK) and 2348–2522 (LEPR…EFMV). Positions 2317-2344 (QVAMQQEEKVLTEQIESLQKEKEELTFE) form a coiled coil. The segment covering 2366-2383 (TADSSENLNVDSEGATSD) has biased composition (polar residues). The span at 2413 to 2429 (SLDSIDSCSTVSSVSSS) shows a compositional bias: low complexity. Over residues 2436–2448 (RTHKLSLRSKSPS) the composition is skewed to basic residues. The segment covering 2497–2506 (RHREQKKDPE) has biased composition (basic and acidic residues).

It belongs to the TRAFAC class myosin-kinesin ATPase superfamily. Myosin family.

Its subcellular location is the membrane. The protein resides in the cytoplasm. It localises to the synapse. The protein localises to the cell projection. It is found in the growth cone. Functionally, myosins are actin-based motor molecules with ATPase activity. Unconventional myosins serve in intracellular movements. Regulates Rho by stimulating it's GTPase activity in neurons. Required for the regulation of neurite branching and motor neuron axon guidance. The polypeptide is Unconventional myosin-IXAa (myo9aa) (Danio rerio (Zebrafish)).